Reading from the N-terminus, the 405-residue chain is Calsequestrin-1 (405 aa).

The N-terminal stretch at 1 to 34 (MRATDRMGARAVSELRLALLFVLVLGTPRLGVQG) is a signal peptide. Position 43 is a phosphotyrosine (Y43). S81 carries the post-translational modification Phosphoserine. Position 124 is a phosphothreonine (T124). S216 carries the phosphoserine modification. N350 carries an N-linked (GlcNAc...) asparagine glycan. The tract at residues 382–405 (EGEINTEDDDDDDDDDDDDDDDDD) is disordered.

The protein belongs to the calsequestrin family. As to quaternary structure, monomer; increases in response to a depletion of intracellular calcium. Homodimer. Homotetramer and homopolymer. Can form linear homooligomers. Ca(2+) ions promote oligomerization. Interacts (via C-terminal end and preferentially with the monomeric form) with STIM1; this interaction increases in response to a depletion of intracellular calcium, decreases both STIM1 aggregation and clustering, interaction of STIM1 with ORAI1 and store-operated Ca(2+) entry (SOCE) activity. Interacts with ASPH and TRDN. In terms of processing, N-glycosylated. In terms of tissue distribution, detected in skeletal muscle (at protein level). Detected in skeletal muscle.

Its subcellular location is the endoplasmic reticulum. The protein resides in the sarcoplasmic reticulum. The protein localises to the sarcoplasmic reticulum lumen. It localises to the sarcoplasmic reticulum membrane. It is found in the mitochondrion matrix. Functionally, calsequestrin is a high-capacity, moderate affinity, calcium-binding protein and thus acts as an internal calcium store in muscle. Calcium ions are bound by clusters of acidic residues at the protein surface, often at the interface between subunits. Can bind around 80 Ca(2+) ions. Regulates the release of lumenal Ca(2+) via the calcium release channel RYR1; this plays an important role in triggering muscle contraction. Negatively regulates store-operated Ca(2+) entry (SOCE) activity. This Mus musculus (Mouse) protein is Calsequestrin-1 (Casq1).